The following is a 132-amino-acid chain: Flagellar basal body rod protein FlgB (132 aa).

Belongs to the flagella basal body rod proteins family. As to quaternary structure, the basal body constitutes a major portion of the flagellar organelle and consists of a number of rings mounted on a central rod. In Gram-negative bacteria, at least four rings, L, P, S and M are present, whereas Gram-positive bacteria lack the L and P rings. The rod consists of about 26 subunits of FlgG in the distal portion, and FlgB, FlgC and FlgF build up the proximal portion of the rod with about 6 subunits each. Rod assembly occurs by export via the flagellum-specific pathway of its constituent proteins and by their incorporation into the rod structure in the probable order of FlgB, FlgC, FlgF and FlgG. Another protein, FliE, also assembles onto the stable rod structure.

The protein resides in the bacterial flagellum basal body. Its function is as follows. Structural component of flagellum, the bacterial motility apparatus. Part of the rod structure of flagellar basal body. This chain is Flagellar basal body rod protein FlgB, found in Aeromonas hydrophila.